Here is a 348-residue protein sequence, read N- to C-terminus: Holliday junction branch migration complex subunit RuvB (348 aa).

The tract at residues 1–183 (MAPQPRRLIA…FGIPIRLEYY (183 aa)) is large ATPase domain (RuvB-L). Residues Leu22, Arg23, Gly64, Lys67, Thr68, Thr69, 130–132 (EDF), Arg173, Tyr183, and Arg220 contribute to the ATP site. Residue Thr68 participates in Mg(2+) binding. A small ATPAse domain (RuvB-S) region spans residues 184 to 254 (TVEELECIVR…VADRALRLLD (71 aa)). The interval 257-348 (HIGLDQMDRR…FQLFSEGGEE (92 aa)) is head domain (RuvB-H). 3 residues coordinate DNA: Arg293, Arg312, and Arg317.

This sequence belongs to the RuvB family. As to quaternary structure, homohexamer. Forms an RuvA(8)-RuvB(12)-Holliday junction (HJ) complex. HJ DNA is sandwiched between 2 RuvA tetramers; dsDNA enters through RuvA and exits via RuvB. An RuvB hexamer assembles on each DNA strand where it exits the tetramer. Each RuvB hexamer is contacted by two RuvA subunits (via domain III) on 2 adjacent RuvB subunits; this complex drives branch migration. In the full resolvosome a probable DNA-RuvA(4)-RuvB(12)-RuvC(2) complex forms which resolves the HJ.

It localises to the cytoplasm. The enzyme catalyses ATP + H2O = ADP + phosphate + H(+). Functionally, the RuvA-RuvB-RuvC complex processes Holliday junction (HJ) DNA during genetic recombination and DNA repair, while the RuvA-RuvB complex plays an important role in the rescue of blocked DNA replication forks via replication fork reversal (RFR). RuvA specifically binds to HJ cruciform DNA, conferring on it an open structure. The RuvB hexamer acts as an ATP-dependent pump, pulling dsDNA into and through the RuvAB complex. RuvB forms 2 homohexamers on either side of HJ DNA bound by 1 or 2 RuvA tetramers; 4 subunits per hexamer contact DNA at a time. Coordinated motions by a converter formed by DNA-disengaged RuvB subunits stimulates ATP hydrolysis and nucleotide exchange. Immobilization of the converter enables RuvB to convert the ATP-contained energy into a lever motion, pulling 2 nucleotides of DNA out of the RuvA tetramer per ATP hydrolyzed, thus driving DNA branch migration. The RuvB motors rotate together with the DNA substrate, which together with the progressing nucleotide cycle form the mechanistic basis for DNA recombination by continuous HJ branch migration. Branch migration allows RuvC to scan DNA until it finds its consensus sequence, where it cleaves and resolves cruciform DNA. This Methylocella silvestris (strain DSM 15510 / CIP 108128 / LMG 27833 / NCIMB 13906 / BL2) protein is Holliday junction branch migration complex subunit RuvB.